A 165-amino-acid polypeptide reads, in one-letter code: Peptidyl-prolyl cis-trans isomerase-like 1 (165 aa).

The PPIase cyclophilin-type domain maps to 3-157; that stretch reads EREEVILDTS…IVQKILYALN (155 aa).

It belongs to the cyclophilin-type PPIase family. PPIL1 subfamily.

It catalyses the reaction [protein]-peptidylproline (omega=180) = [protein]-peptidylproline (omega=0). Functionally, PPIases accelerate the folding of proteins. It catalyzes the cis-trans isomerization of proline imidic peptide bonds in oligopeptides. The polypeptide is Peptidyl-prolyl cis-trans isomerase-like 1 (cyp3) (Rhizopus delemar (strain RA 99-880 / ATCC MYA-4621 / FGSC 9543 / NRRL 43880) (Mucormycosis agent)).